Consider the following 276-residue polypeptide: Lipoyl synthase (276 aa).

Positions 27, 32, 38, 53, 57, 60, and 266 each coordinate [4Fe-4S] cluster. The Radical SAM core domain occupies 39–255; that stretch reads FGNKTATFMI…EEIGYEMGFK (217 aa).

This sequence belongs to the radical SAM superfamily. Lipoyl synthase family. It depends on [4Fe-4S] cluster as a cofactor.

Its subcellular location is the cytoplasm. It carries out the reaction [[Fe-S] cluster scaffold protein carrying a second [4Fe-4S](2+) cluster] + N(6)-octanoyl-L-lysyl-[protein] + 2 oxidized [2Fe-2S]-[ferredoxin] + 2 S-adenosyl-L-methionine + 4 H(+) = [[Fe-S] cluster scaffold protein] + N(6)-[(R)-dihydrolipoyl]-L-lysyl-[protein] + 4 Fe(3+) + 2 hydrogen sulfide + 2 5'-deoxyadenosine + 2 L-methionine + 2 reduced [2Fe-2S]-[ferredoxin]. Its pathway is protein modification; protein lipoylation via endogenous pathway; protein N(6)-(lipoyl)lysine from octanoyl-[acyl-carrier-protein]: step 2/2. Its function is as follows. Catalyzes the radical-mediated insertion of two sulfur atoms into the C-6 and C-8 positions of the octanoyl moiety bound to the lipoyl domains of lipoate-dependent enzymes, thereby converting the octanoylated domains into lipoylated derivatives. This chain is Lipoyl synthase, found in Aquifex aeolicus (strain VF5).